Reading from the N-terminus, the 280-residue chain is 3-deoxy-manno-octulosonate cytidylyltransferase (280 aa).

It belongs to the KdsB family.

The protein resides in the cytoplasm. The catalysed reaction is 3-deoxy-alpha-D-manno-oct-2-ulosonate + CTP = CMP-3-deoxy-beta-D-manno-octulosonate + diphosphate. It participates in nucleotide-sugar biosynthesis; CMP-3-deoxy-D-manno-octulosonate biosynthesis; CMP-3-deoxy-D-manno-octulosonate from 3-deoxy-D-manno-octulosonate and CTP: step 1/1. Its pathway is bacterial outer membrane biogenesis; lipopolysaccharide biosynthesis. Its function is as follows. Activates KDO (a required 8-carbon sugar) for incorporation into bacterial lipopolysaccharide in Gram-negative bacteria. The polypeptide is 3-deoxy-manno-octulosonate cytidylyltransferase (Colwellia psychrerythraea (strain 34H / ATCC BAA-681) (Vibrio psychroerythus)).